The chain runs to 138 residues: Rubber elongation factor protein (138 aa).

At Ala-2 the chain carries N-acetylalanine.

The protein belongs to the REF/SRPP family. As to quaternary structure, in solution, able to form amyloid fibers and aggregates rich in beta-sheets. Interaction with membrane stabilizes the protein, inhibiting the amyloid state and aggregation. Post-translationally, not glycosylated. As to expression, localized in all laticifer layers.

It localises to the cytoplasm. Its function is as follows. May be part of the rubber biosynthesis machinery. Plays a role in rubber elongation. In Hevea brasiliensis (Para rubber tree), this protein is Rubber elongation factor protein.